The primary structure comprises 1117 residues: Telomerase reverse transcriptase (1117 aa).

Residues 1 to 191 (MQKINNINNN…VKQKKWYKNN (191 aa)) are TEN. Residues 217–519 (NQYIYPEIQR…ENLEKVEEKL (303 aa)) form an RBD region. Residues 517–881 (EKLIPEDSFQ…NECQWIGKSI (365 aa)) form the Reverse transcriptase domain. Positions 520-887 (IPEDSFQKYP…GKSIDMNTLE (368 aa)) are RT. D618 serves as a coordination point for Mg(2+). The interval 638–742 (SDLIQDTYFI…NQDKPRCITK (105 aa)) is TRAP. 2 residues coordinate Mg(2+): D815 and D816. Positions 888-1117 (IKSIQKQTQQ…SAKSNQQNTN (230 aa)) are CTE.

Belongs to the reverse transcriptase family. Telomerase subfamily. As to quaternary structure, component of the telomerase holoenzyme complex, composed of the catalytic core (the catalytic subunit TERT, the telomerase RNA template component TER and TAP65/p65), which is associated with two heterotrimeric subcomplexes: (i) the replication protein A (RPA)-related subcomplex, composed of TEB1, RPA2/TEB2 and RPA3/TEB3 and (ii) the CST-like subcomplex, composed of TAP75/p75, TAP45/p45 and TAP19/p19. TEB1 and the CST-like subcomplex are tethered to the catalytic core by TAP50/p50.

It localises to the nucleus. Its subcellular location is the chromosome. The protein resides in the telomere. The enzyme catalyses DNA(n) + a 2'-deoxyribonucleoside 5'-triphosphate = DNA(n+1) + diphosphate. Its function is as follows. Catalytic component of telomerase, an essential ribonucleoprotein enzyme that copies new telomeric repeats onto chromosome ends by repetitively synthesizing the short telomere-repeat sequence 5'-TTGGGG-3' using an RNA template component TER. TERT is a reverse transcriptase that adds simple sequence repeats to chromosome ends by copying a template sequence within the RNA component of the enzyme. The polypeptide is Telomerase reverse transcriptase (Tetrahymena thermophila (strain SB210)).